The sequence spans 553 residues: ATP synthase F(1) complex subunit alpha, mitochondrial (553 aa).

The N-terminal 43 residues, 1–43 (MLSVRVAAAVVRALPRRAGLVSRNALGSSFIAARNFHASNTHL), are a transit peptide targeting the mitochondrion. Phosphoserine is present on residues Ser-53 and Ser-65. Position 76 is a phosphoserine; alternate (Ser-76). A glycan (O-linked (GlcNAc) serine; alternate) is linked at Ser-76. Ser-106 bears the Phosphoserine mark. Lys-123, Lys-126, and Lys-132 each carry N6-acetyllysine. Phosphothreonine is present on Thr-134. At Lys-161 the chain carries N6-acetyllysine; alternate. Lys-161 is modified (N6-succinyllysine; alternate). At Ser-166 the chain carries Phosphoserine. Residue Lys-167 is modified to N6-acetyllysine; alternate. Lys-167 carries the N6-succinyllysine; alternate modification. Ser-184 carries the post-translational modification Phosphoserine. Arg-204 carries the post-translational modification Omega-N-methylarginine. 5 residues coordinate ATP: Gln-215, Gly-217, Lys-218, Thr-219, and Ser-220. Thr-219 contributes to the Mg(2+) binding site. N6-acetyllysine; alternate occurs at positions 230 and 239. N6-succinyllysine; alternate occurs at positions 230 and 239. Lys-240 is subject to N6-acetyllysine. N6-acetyllysine; alternate is present on residues Lys-261 and Lys-305. Lys-261 and Lys-305 each carry N6-succinyllysine; alternate. A Mg(2+)-binding site is contributed by Asp-312. Lys-427 bears the N6-acetyllysine; alternate mark. Position 427 is an N6-succinyllysine; alternate (Lys-427). Lys-434 carries the post-translational modification N6-acetyllysine. ATP is bound by residues Gln-473 and Gln-475. N6-acetyllysine; alternate occurs at positions 498, 506, 531, and 539. Lys-498, Lys-506, Lys-531, and Lys-539 each carry N6-succinyllysine; alternate. Lys-541 bears the N6-acetyllysine mark.

The protein belongs to the ATPase alpha/beta chains family. In terms of assembly, homotrimer. Component of the ATP synthase complex composed at least of ATP5F1A/subunit alpha, ATP5F1B/subunit beta, ATP5MC1/subunit c (homooctomer), MT-ATP6/subunit a, MT-ATP8/subunit 8, ATP5ME/subunit e, ATP5MF/subunit f, ATP5MG/subunit g, ATP5MK/subunit k, ATP5MJ/subunit j, ATP5F1C/subunit gamma, ATP5F1D/subunit delta, ATP5F1E/subunit epsilon, ATP5PF/subunit F6, ATP5PB/subunit b, ATP5PD/subunit d, ATP5PO/subunit OSCP. ATP synthase complex consists of a soluble F(1) head domain (subunits alpha(3) and beta(3)) - the catalytic core - and a membrane F(0) domain - the membrane proton channel (subunits c, a, 8, e, f, g, k and j). These two domains are linked by a central stalk (subunits gamma, delta, and epsilon) rotating inside the F1 region and a stationary peripheral stalk (subunits F6, b, d, and OSCP). Interacts with ATPAF2. Interacts with HRG; the interaction occurs on the surface of T-cells and alters the cell morphology when associated with concanavalin (in vitro). Interacts with PLG (angiostatin peptide); the interaction inhibits most of the angiogenic properties of angiostatin. Interacts with BLOC1S1. Interacts with BCL2L1 isoform BCL-X(L); the interaction mediates the association of BCL2L1 isoform BCL-X(L) with the mitochondrial membrane F(1)F(0) ATP synthase and enhances neurons metabolic efficiency. Interacts with CLN5 and PPT1. Interacts with S100A1; this interaction increases F1-ATPase activity. Interacts with ABCB7; this interaction allows the regulation of cellular iron homeostasis and cellular reactive oxygen species (ROS) levels in cardiomyocytes. Post-translationally, acetylated on lysine residues. BLOC1S1 is required for acetylation.

It is found in the mitochondrion inner membrane. Its subcellular location is the cell membrane. Subunit alpha, of the mitochondrial membrane ATP synthase complex (F(1)F(0) ATP synthase or Complex V) that produces ATP from ADP in the presence of a proton gradient across the membrane which is generated by electron transport complexes of the respiratory chain. ATP synthase complex consist of a soluble F(1) head domain - the catalytic core - and a membrane F(1) domain - the membrane proton channel. These two domains are linked by a central stalk rotating inside the F(1) region and a stationary peripheral stalk. During catalysis, ATP synthesis in the catalytic domain of F(1) is coupled via a rotary mechanism of the central stalk subunits to proton translocation. In vivo, can only synthesize ATP although its ATP hydrolase activity can be activated artificially in vitro. With the catalytic subunit beta (ATP5F1B), forms the catalytic core in the F(1) domain. Subunit alpha does not bear the catalytic high-affinity ATP-binding sites. The protein is ATP synthase F(1) complex subunit alpha, mitochondrial of Pongo abelii (Sumatran orangutan).